We begin with the raw amino-acid sequence, 194 residues long: Chorion class B protein ERB4 (194 aa).

The N-terminal stretch at 1-20 is a signal peptide; that stretch reads MSSNVIVLCVSALFIQCAVS. A left arm region spans residues 22-72; that stretch reads CVGRIGSLRGGPFDGWGYDGLGYDGFGIGGWNGRGCGGLGDDIAAAAALGA. The segment at 73–128 is central domain; that stretch reads SHGGTLAVVSTSAAPTGLGIASENVYEGSVGVCGNLPFLGTADVAGEFPTAGLGGI. The interval 129-194 is right arm (Gly-rich tandem repeats); the sequence is DYTCGDGAVG…RGCGCGANYY (66 aa).

The protein belongs to the chorion protein family.

Functionally, this protein is one of many from the eggshell of the silk moth. The polypeptide is Chorion class B protein ERB4 (Bombyx mori (Silk moth)).